The sequence spans 450 residues: Transcription factor SCREAM2 (450 aa).

Disordered stretches follow at residues 1-47 (MNSD…NQND), 207-231 (RQSS…YERE), and 244-265 (GLNY…KGMP). The span at 209 to 220 (SSSSKMCNSESS) shows a compositional bias: low complexity. Basic and acidic residues predominate over residues 221 to 230 (SEMRKSSYER). The bHLH domain maps to 263 to 312 (GMPAKNLMAERRRRKKLNDRLYMLRSVVPKISKMDRASILGDAIDYLKEL). The 73-residue stretch at 378-450 (NIHMFCGRRP…LDTAGYAGLV (73 aa)) folds into the ACT domain.

In terms of assembly, homodimer. Heterodimers with SPCH, MUTE, and FAMA. As to expression, expressed constitutively in roots, leaves, stems, and flowers. Broad expression within stomatal cell lineages of leaf epidermis, except in mature guard-cells.

It localises to the nucleus. Its function is as follows. Mediates stomatal differentiation in the epidermis probably by controlling successive roles of SPCH, MUTE, and FAMA. Functions as a dimer with SPCH during stomatal initiation. The chain is Transcription factor SCREAM2 (SCRM2) from Arabidopsis thaliana (Mouse-ear cress).